The following is a 274-amino-acid chain: Putative phosphatase BUsg_029 (274 aa).

Aspartate 8 (nucleophile) is an active-site residue. Aspartate 8 serves as a coordination point for Mg(2+). Leucine 9 is a phosphate binding site. Position 10 (aspartate 10) interacts with Mg(2+). Phosphate contacts are provided by residues 42–43 and lysine 191; that span reads SG. Mg(2+) is bound at residue aspartate 214. Asparagine 217 lines the phosphate pocket.

The protein belongs to the HAD-like hydrolase superfamily. Cof family. Requires Mg(2+) as cofactor.

The protein is Putative phosphatase BUsg_029 of Buchnera aphidicola subsp. Schizaphis graminum (strain Sg).